Consider the following 419-residue polypeptide: ADIPOR-like receptor IZH3 (419 aa).

Positions 1–65 are disordered; sequence MSHPNTHMPR…GEAGGGRSVL (65 aa). The Lumenal portion of the chain corresponds to 1–147; the sequence is MSHPNTHMPR…LNAYGWHNET (147 aa). The N-linked (GlcNAc...) asparagine glycan is linked to asparagine 145. The helical transmembrane segment at 148–168 threads the bilayer; it reads INIWSHLVGAAVLAYLLCWGW. Over 169 to 184 the chain is Cytoplasmic; that stretch reads PRSDVYRAAQVPRLAK. The helical transmembrane segment at 185–205 threads the bilayer; that stretch reads WAIGAFLACGVKCMASSVAWH. The Lumenal segment spans residues 206–225; the sequence is TFNGTCHLKLRSRFVCVDYT. Asparagine 208 carries N-linked (GlcNAc...) asparagine glycosylation. A helical transmembrane segment spans residues 226-246; that stretch reads GITLLVTASVVTTVAVTLYGL. The Cytoplasmic segment spans residues 247–249; it reads SRP. The helical transmembrane segment at 250–270 threads the bilayer; sequence LMYAYMVASIGLGTAAGVMNW. Topologically, residues 271–283 are lumenal; it reads SPHFDRPEARPLR. The chain crosses the membrane as a helical span at residues 284–304; the sequence is IAVYVGLAALGLVSFVHVWMQ. Topologically, residues 305 to 311 are cytoplasmic; it reads VRWASAH. A helical transmembrane segment spans residues 312-332; that stretch reads LMAPLVYKSLVWYGIGVVFYA. The Lumenal segment spans residues 333 to 377; the sequence is TLVPERWRSDVTLDCCSGPVHEAACRQFRDLPPVARKDRQFWSLW. The helical transmembrane segment at 378 to 398 threads the bilayer; sequence WVDYFCHSHFLWHVFVVLGVV. The Cytoplasmic segment spans residues 399-419; that stretch reads GHYRAVLQMSRIVWLDAGRAF.

The protein belongs to the ADIPOR family.

Its subcellular location is the endoplasmic reticulum membrane. Its function is as follows. ADIPOR-like receptor involved in zinc metabolism either by altering membrane sterol content or by directly altering cellular zinc levels. The protein is ADIPOR-like receptor IZH3 (IZH3) of Eremothecium gossypii (strain ATCC 10895 / CBS 109.51 / FGSC 9923 / NRRL Y-1056) (Yeast).